A 303-amino-acid chain; its full sequence is Mitochondrial basic amino acids transporter (303 aa).

A run of 6 helical transmembrane segments spans residues 2–22 (ALDFLAGCAGGVAGVLVGHPF), 61–81 (GLGSPLMGLTFINALVFGVQG), 96–116 (FLAGAAAGAIQCVICCPMELA), 153–172 (GMVSTLLRETPSFGVYFLTY), 187–207 (LLVPKLLLAGGTSGIVSWLST), and 255–275 (LLRAFPVNAATFATVTVVLTY). 3 Solcar repeats span residues 2–86 (ALDF…TLRA), 90–178 (DSPL…LTRA), and 185–275 (DRLL…VLTY). The segment at 282–303 (GPEGEAVPAAPAGPALAQPSSL) is disordered. Positions 284-303 (EGEAVPAAPAGPALAQPSSL) are enriched in low complexity.

Belongs to the mitochondrial carrier (TC 2.A.29) family.

Its subcellular location is the mitochondrion inner membrane. It carries out the reaction L-lysine(out) + L-arginine(in) = L-lysine(in) + L-arginine(out). The catalysed reaction is L-histidine(out) + L-arginine(in) = L-histidine(in) + L-arginine(out). It catalyses the reaction L-ornithine(in) + L-arginine(out) = L-ornithine(out) + L-arginine(in). The enzyme catalyses L-homoarginine(in) + L-arginine(out) = L-homoarginine(out) + L-arginine(in). It carries out the reaction N(omega)-methyl-L-arginine(in) + L-arginine(out) = N(omega)-methyl-L-arginine(out) + L-arginine(in). The catalysed reaction is L-arginine(in) = L-arginine(out). It catalyses the reaction L-lysine(in) = L-lysine(out). The enzyme catalyses L-ornithine(in) = L-ornithine(out). It carries out the reaction L-histidine(out) = L-histidine(in). Its function is as follows. Mitochondrial transporter of arginine, lysine, homoarginine, methylarginine and, to a much lesser extent, ornithine and histidine. Does not transport carnitine nor acylcarnitines. Functions by both counter-exchange and uniport mechanisms. Plays a physiological role in the import of basic amino acids into mitochondria for mitochondrial protein synthesis and amino acid degradation. This Homo sapiens (Human) protein is Mitochondrial basic amino acids transporter.